Here is a 374-residue protein sequence, read N- to C-terminus: Arrestin domain-containing protein 15 (374 aa).

The interval 344 to 374 (HHLNRSKAKVSKTEQQQRKTRNIVEENPYFR) is disordered.

This sequence belongs to the arrestin family.

In Caenorhabditis elegans, this protein is Arrestin domain-containing protein 15 (arrd-15).